The following is a 319-amino-acid chain: Cobalamin biosynthesis protein CbiB (319 aa).

5 helical membrane-spanning segments follow: residues 56-76 (VMWV…LALA), 82-102 (WFGW…RSLA), 153-173 (VDGI…LAMA), 204-224 (VANY…AGLC), and 296-316 (LMWV…CGLS).

It belongs to the CobD/CbiB family.

It is found in the cell membrane. Its pathway is cofactor biosynthesis; adenosylcobalamin biosynthesis. Converts cobyric acid to cobinamide by the addition of aminopropanol on the F carboxylic group. However, the true cosubstrate could be (R)-1-amino-2-propanol O-2-phosphate, leading to cobinamide phosphate. In Salmonella choleraesuis (strain SC-B67), this protein is Cobalamin biosynthesis protein CbiB.